A 356-amino-acid polypeptide reads, in one-letter code: UDP-N-acetylglucosamine--N-acetylmuramyl-(pentapeptide) pyrophosphoryl-undecaprenol N-acetylglucosamine transferase (356 aa).

Positions 166, 196, and 290 each coordinate UDP-N-acetyl-alpha-D-glucosamine.

This sequence belongs to the glycosyltransferase 28 family. MurG subfamily.

Its subcellular location is the cell membrane. It carries out the reaction Mur2Ac(oyl-L-Ala-gamma-D-Glu-L-Lys-D-Ala-D-Ala)-di-trans,octa-cis-undecaprenyl diphosphate + UDP-N-acetyl-alpha-D-glucosamine = beta-D-GlcNAc-(1-&gt;4)-Mur2Ac(oyl-L-Ala-gamma-D-Glu-L-Lys-D-Ala-D-Ala)-di-trans,octa-cis-undecaprenyl diphosphate + UDP + H(+). Its pathway is cell wall biogenesis; peptidoglycan biosynthesis. In terms of biological role, cell wall formation. Catalyzes the transfer of a GlcNAc subunit on undecaprenyl-pyrophosphoryl-MurNAc-pentapeptide (lipid intermediate I) to form undecaprenyl-pyrophosphoryl-MurNAc-(pentapeptide)GlcNAc (lipid intermediate II). The chain is UDP-N-acetylglucosamine--N-acetylmuramyl-(pentapeptide) pyrophosphoryl-undecaprenol N-acetylglucosamine transferase from Staphylococcus aureus (strain USA300).